The sequence spans 185 residues: Ribosome-recycling factor (185 aa).

It belongs to the RRF family.

It localises to the cytoplasm. Functionally, responsible for the release of ribosomes from messenger RNA at the termination of protein biosynthesis. May increase the efficiency of translation by recycling ribosomes from one round of translation to another. This Thermomicrobium roseum (strain ATCC 27502 / DSM 5159 / P-2) protein is Ribosome-recycling factor.